Consider the following 181-residue polypeptide: Oligoribonuclease (181 aa).

Residues 8–171 (LIWIDLEMTG…DDIRESVAEL (164 aa)) enclose the Exonuclease domain. The active site involves Tyr-129.

It belongs to the oligoribonuclease family. As to quaternary structure, homodimer.

Its subcellular location is the cytoplasm. Functionally, 3'-to-5' exoribonuclease specific for small oligoribonucleotides. This is Oligoribonuclease from Escherichia coli O157:H7.